Consider the following 847-residue polypeptide: Protein HIR2 (847 aa).

5 WD repeats span residues L10 to T46, K113 to S153, E155 to L194, K259 to D305, and V309 to V348. The interval P368 to A399 is disordered. Residues K384–K394 show a composition bias toward polar residues. WD repeat units lie at residues R508–T548 and P558–P597.

It belongs to the WD repeat HIR1 family.

Its subcellular location is the nucleus. Functionally, required for replication-independent chromatin assembly and for the periodic repression of histone gene transcription during the cell cycle. This Kluyveromyces lactis (strain ATCC 8585 / CBS 2359 / DSM 70799 / NBRC 1267 / NRRL Y-1140 / WM37) (Yeast) protein is Protein HIR2 (HIR2).